We begin with the raw amino-acid sequence, 420 residues long: Glutamate dehydrogenase (420 aa).

Lys105 is a catalytic residue. 220–226 (GYGNAGY) is an NAD(+) binding site.

This sequence belongs to the Glu/Leu/Phe/Val dehydrogenases family. As to quaternary structure, homohexamer.

The protein localises to the cytoplasm. The enzyme catalyses L-glutamate + NAD(+) + H2O = 2-oxoglutarate + NH4(+) + NADH + H(+). The catalysed reaction is L-glutamate + NADP(+) + H2O = 2-oxoglutarate + NH4(+) + NADPH + H(+). This Pyrococcus horikoshii (strain ATCC 700860 / DSM 12428 / JCM 9974 / NBRC 100139 / OT-3) protein is Glutamate dehydrogenase (gdhA).